Consider the following 122-residue polypeptide: Large ribosomal subunit protein uL14c (122 aa).

Belongs to the universal ribosomal protein uL14 family. In terms of assembly, part of the 50S ribosomal subunit.

It is found in the plastid. Binds to 23S rRNA. This Cuscuta gronovii (Common dodder) protein is Large ribosomal subunit protein uL14c.